The chain runs to 242 residues: MIIDNLTIGKYISRPNRFTIEFKDKDKAITLAHLHDPGRLKELLIPNTDVLLKYINTYKETGRKTKYDVIAIKNKNNWILLNSSYHNKLVEELINTKEINSLENFHIDKPEIKYKNSRIDFLLKDDKNNPLYLEVKGCTLVEDTTAKFPDAPTKRGKKHVEELMEIHEKGIFTMVLILVLHNDADEFKPNYDTDIDFSQTLHEAYISGVKIYPLKINTELKNNSIILKKDRILSIKFKERNK.

This sequence belongs to the SfsA family.

The polypeptide is Sugar fermentation stimulation protein homolog (Methanosphaera stadtmanae (strain ATCC 43021 / DSM 3091 / JCM 11832 / MCB-3)).